Here is a 626-residue protein sequence, read N- to C-terminus: Acetolactate synthase large subunit (626 aa).

Polar residues predominate over residues 1–13 (MNVAASQQPTPAT). The tract at residues 1–23 (MNVAASQQPTPATVASRGRSAAP) is disordered. Glu-73 contacts thiamine diphosphate. FAD is bound by residues Arg-175, 281–302 (HGTV…IGSR), and 324–343 (DIDP…IVGD). Positions 416-496 (QHQMWAAQFV…IKIALINNGN (81 aa)) are thiamine pyrophosphate binding. Asp-467 and Asn-494 together coordinate Mg(2+).

It belongs to the TPP enzyme family. Dimer of large and small chains. It depends on Mg(2+) as a cofactor. Thiamine diphosphate serves as cofactor.

It carries out the reaction 2 pyruvate + H(+) = (2S)-2-acetolactate + CO2. It participates in amino-acid biosynthesis; L-isoleucine biosynthesis; L-isoleucine from 2-oxobutanoate: step 1/4. Its pathway is amino-acid biosynthesis; L-valine biosynthesis; L-valine from pyruvate: step 1/4. This Corynebacterium glutamicum (strain ATCC 13032 / DSM 20300 / JCM 1318 / BCRC 11384 / CCUG 27702 / LMG 3730 / NBRC 12168 / NCIMB 10025 / NRRL B-2784 / 534) protein is Acetolactate synthase large subunit (ilvB).